Consider the following 1133-residue polypeptide: MSSLSRELVFLILQFLDEEKFKETVHKLEQESGFYFNMKYFEDEVINGNWDEVERYLGGFTKVDDNRYSMKIFFEIRKQKYLEALDKHDRSKAVEILVKDLKVFASFNEELFKEITQLLTLENFRENEQLSKYGDTKSARAIMLVELKKLIEANPLFRDKLQFPNLKSSRLRTLINQSLNWQHQLCKNPRPNPDIKTLFVDHSCGQPNGARAPSPANNPLLGSIPKPGGFPPLGAHAPFQPAPTPVPPLAGWMSNPPAVTHPAVSGGAIGFGTPTNPAAILKHPRTPTTANPSMDYPSGDSDHVSKRTRPVGMSEEVNLPVNMLPVTYPQSHSYPQDDFHKNVARTLSQGSTPMSMDFHPVQQTLLLVGTNVGDIGLWDVGTKERLVLRNFKVWDLTKCSMALQASLVKDPTVSVNRIIWSPDGTLFGVAYSRHIVQIYSYHGGDDIRQHLEIDAHVGGVNDIAFAHPNKQLCIITCGDDKTIKVWEATSGAKQFTFEGHEAPVYSVCPHYKENIQFIFSTALDGKIKAWLYDNLGSRVDYDAPGHWCTTMAYSADGSRLFSCGTSKDGESHLVEWNESEGAVKRTYQGFRKRSMGVVQFDTTRNRFLAAGDEFLIKIWDMDNTSLLTTIDADGGLPASPRVRFNKEGTLLAVSTHENGIKILANADGVRLLRTLENRSFDASRSASETVTKPLMNPLTAAAAAAASAAAAGTSSGNAAPPAITALNGDSRSLVDVKPRIADEPLDKSKVWKLMEITESSQCRSLKLTDNMRTSKISRLIYTNSGVAILALASNAVHLLWKWPRNDRNSSGKATASVSPQLWQPPSGILMTNDITDNPEEAVHCFALSKNDSYVMSASGGKISLFNMMTFKTMTTFMPPPPAATFLAFHPQDNNIIAIGMDDSTIQIYNVRIDEVKSKLRGHSKKITGLAFSNVLNVLVSSGADAQICVWSTDGWDKLKSRMLQIPSSRPSSIILDTRVQFHQDQLHFLVVHETQIAIYETTKLEPVKQWPVRENSSPITHAMFSCDSQLIYASFLDATVCIFNASSLRLQCRILPASYLPQNISSNVYPVVVAAHPSEANQFALGLTDGGVYVLEPLESERKWGNPPPAENGSTSALSTPPNGASSSDQPER.

Positions 4–36 (LSRELVFLILQFLDEEKFKETVHKLEQESGFYF) constitute a LisH domain. Positions 34-92 (FYFNMKYFEDEVINGNWDEVERYLGGFTKVDDNRYSMKIFFEIRKQKYLEALDKHDRSK) constitute a CTLH domain. The disordered stretch occupies residues 287–307 (PTTANPSMDYPSGDSDHVSKR). 12 WD repeats span residues 348-388 (SQGS…RLVL), 410-449 (DPTV…DIRQ), 455-496 (AHVG…KQFT), 499-540 (GHEA…SRVD), 543-586 (APGH…VKRT), 590-629 (FRKR…LLTT), 634-673 (GGLP…RLLR), 771-810 (MRTS…RNSS), 837-875 (NPEE…TMTT), 878-918 (PPPP…VKSK), 921-960 (GHSK…KLKS), and 1014-1053 (ENSS…LQCR). The tract at residues 1099-1133 (ESERKWGNPPPAENGSTSALSTPPNGASSSDQPER) is disordered. Residues 1112-1133 (NGSTSALSTPPNGASSSDQPER) are compositionally biased toward polar residues.

Tetramer. Interacts with D53. Interacts with MODD and HDAC1. Interacts with WOX1. Interacts with MOF1. In terms of tissue distribution, expressed in panicles, stems, leaves, spikelets and seed endosperm.

Its function is as follows. Probable downstream regulator of strigolactones signaling. Functions in a complex with MODD and HDAC1 to down-regulate the histone acetylation level at BZIP46 target genes. BZIP46 is a positive regulator of abscisic acid (ABA) signaling and drought stress tolerance. In Oryza sativa subsp. japonica (Rice), this protein is Protein TPR3.